The primary structure comprises 512 residues: Bifunctional NAD(P)H-hydrate repair enzyme Nnr (512 aa).

Residues 1-220 (MPIVAYDPDK…GVPPRLVLPQ (220 aa)) form an NAD(P)H-hydrate epimerase region. Residues 11–218 (VREADRAAVR…PIGVPPRLVL (208 aa)) enclose the YjeF N-terminal domain. Residues 58 to 62 (NNGGD) form an NADPHX 1; for epimerase activity region. K(+)-binding residues include Asn-59 and Asp-127. The interval 131–137 (GTGSGGE) is NADPHX 1; for epimerase activity. Residue Asp-161 coordinates (6S)-NADPHX. Thr-164 lines the K(+) pocket. Positions 228 to 509 (GYEDLSHMRL…HQAALVLGGL (282 aa)) constitute a YjeF C-terminal domain. The interval 228-512 (GYEDLSHMRL…ALVLGGLGDV (285 aa)) is ADP-dependent (S)-NAD(P)H-hydrate dehydratase. Gly-335 is a (6S)-NADPHX binding site. The tract at residues 385–391 (HEGEAAC) is NADPHX 2; for dehydratase activity. ADP contacts are provided by residues 421 to 425 (KGRNS) and 440 to 449 (HPNLSVPGSG). Asp-450 contacts (6S)-NADPHX.

This sequence in the N-terminal section; belongs to the NnrE/AIBP family. It in the C-terminal section; belongs to the NnrD/CARKD family. Requires K(+) as cofactor.

The catalysed reaction is (6S)-NADHX + ADP = AMP + phosphate + NADH + H(+). It catalyses the reaction (6S)-NADPHX + ADP = AMP + phosphate + NADPH + H(+). The enzyme catalyses (6R)-NADHX = (6S)-NADHX. It carries out the reaction (6R)-NADPHX = (6S)-NADPHX. In terms of biological role, bifunctional enzyme that catalyzes the epimerization of the S- and R-forms of NAD(P)HX and the dehydration of the S-form of NAD(P)HX at the expense of ADP, which is converted to AMP. This allows the repair of both epimers of NAD(P)HX, a damaged form of NAD(P)H that is a result of enzymatic or heat-dependent hydration. This chain is Bifunctional NAD(P)H-hydrate repair enzyme Nnr (nnr), found in Thermanaerovibrio acidaminovorans (strain ATCC 49978 / DSM 6589 / Su883) (Selenomonas acidaminovorans).